The sequence spans 257 residues: MSKTAIITGSAGGLGKGIAERLANDGFNIVLQDINEALLLETEKEFKEKGYQAVAFKSDVSKKKEQEELVQFAVTEFGQLDVMVNNAGVDAVTPILEIGEEELSKLFNINVFGTLFGIQAAANQFIKQKSKGKIINACSIAGHESYEVLGTYSATKHSVRSFTQTAAKELADKGITVNAYCPGVAKTEMWDRIDEEMVKLDDSLEIGDAFEAFSSEIKLGRYQEPSDVANLVSFLASNDSDYITGQSILTDGGLVYR.

6–30 (IITGSAGGLGKGIAERLANDGFNIV) provides a ligand contact to NAD(+). Ser139 contributes to the substrate binding site. The active-site Proton acceptor is Tyr152. Lys156 is an active-site residue.

The protein belongs to the short-chain dehydrogenases/reductases (SDR) family.

The catalysed reaction is (S)-acetoin + NAD(+) = diacetyl + NADH + H(+). Its function is as follows. Catalyzes the irreversible reduction of 2,3-butanediol to (S)-acetoin in the presence of NADH. The sequence is that of Diacetyl reductase [(S)-acetoin forming] (butA) from Staphylococcus epidermidis (strain ATCC 35984 / DSM 28319 / BCRC 17069 / CCUG 31568 / BM 3577 / RP62A).